The following is a 317-amino-acid chain: Polysulfide reductase chain C (317 aa).

8 helical membrane-spanning segments follow: residues 20–40 (IAVY…AIII), 54–75 (IIKA…LLIF), 98–118 (LGVL…LGVF), 147–167 (IVTF…LSAM), 182–202 (FLAS…LLFF), 221–237 (VILF…VGMY), 259–279 (LFWL…NVAL), and 289–309 (FVML…FYIL).

This sequence belongs to the NrfD family. In terms of assembly, functional polysulfide reductase is made up of three different (A, B, and C) subunits.

The protein localises to the cell inner membrane. In terms of biological role, could possibly serve as the membrane anchor of the enzyme. Functionally, component of the phosphorylative electron transport system with polysulfide as the terminal acceptor. This chain is Polysulfide reductase chain C (psrC), found in Wolinella succinogenes (strain ATCC 29543 / DSM 1740 / CCUG 13145 / JCM 31913 / LMG 7466 / NCTC 11488 / FDC 602W) (Vibrio succinogenes).